The primary structure comprises 85 residues: Neurotoxin 60.35 (85 aa).

The first 23 residues, 1-23, serve as a signal peptide directing secretion; that stretch reads MKFCVAVSLLIIASMAGVISVSG. An LCN-type CS-alpha/beta domain is found at 24-85; that stretch reads YDVYPRDYAG…NFLSVIWKQC (62 aa). Intrachain disulfides connect cysteine 38/cysteine 60, cysteine 46/cysteine 65, and cysteine 50/cysteine 67.

The protein belongs to the long (3 C-C) scorpion toxin superfamily. As to expression, expressed by the venom gland.

Its subcellular location is the secreted. This chain is Neurotoxin 60.35, found in Lychas mucronatus (Chinese swimming scorpion).